We begin with the raw amino-acid sequence, 63 residues long: Large ribosomal subunit protein bL28 (63 aa).

This sequence belongs to the bacterial ribosomal protein bL28 family.

This is Large ribosomal subunit protein bL28 from Symbiobacterium thermophilum (strain DSM 24528 / JCM 14929 / IAM 14863 / T).